A 492-amino-acid polypeptide reads, in one-letter code: Probable glycogen synthase 2 (492 aa).

Position 15 (K15) interacts with ADP-alpha-D-glucose.

The protein belongs to the glycosyltransferase 1 family. Bacterial/plant glycogen synthase subfamily.

It carries out the reaction [(1-&gt;4)-alpha-D-glucosyl](n) + ADP-alpha-D-glucose = [(1-&gt;4)-alpha-D-glucosyl](n+1) + ADP + H(+). The protein operates within glycan biosynthesis; glycogen biosynthesis. In terms of biological role, synthesizes alpha-1,4-glucan chains using ADP-glucose. The chain is Probable glycogen synthase 2 (glgA2) from Nostoc sp. (strain PCC 7120 / SAG 25.82 / UTEX 2576).